The following is a 356-amino-acid chain: MKREILLERIDKLKQLMPWYVLEYYQSKLAVPYSFTTLYEYLKEYDRFFSWVLESGISNADKISDIPLSVLENMSKKDMESFILYLRERPLLNANTTKQGVSQTTINRTLSALSSLYKYLTEEVENDQGEPYFYRNVMKKVSTKKKKETLAARAENIKQKLFLGDETEGFLTYIDQEHPQQLSNRALSSFNKNKERDLAIIALLLASGVRLSEAVNLDLRDLNLKMMVIDVTRKGGKRDSVNVAAFAKPYLENYLAIRNQRYKTEKTDTALFLTLYRGVPNRIDASSVEKMVAKYSEDFKVRVTPHKLRHTLATRLYDATKSQVLVSHQLGHASTQVTDLYTHIVNDEQKNALDSL.

The region spanning 16–121 (LMPWYVLEYY…ALSSLYKYLT (106 aa)) is the Core-binding (CB) domain. Residues 169–354 (GFLTYIDQEH…VNDEQKNALD (186 aa)) enclose the Tyr recombinase domain. Active-site residues include arginine 210, lysine 234, histidine 306, arginine 309, and histidine 332. The O-(3'-phospho-DNA)-tyrosine intermediate role is filled by tyrosine 341.

It belongs to the 'phage' integrase family. XerS subfamily.

It is found in the cytoplasm. Its activity is regulated as follows. FtsK is required for recombination. In terms of biological role, site-specific tyrosine recombinase, which acts by catalyzing the cutting and rejoining of the recombining DNA molecules. Essential to convert dimers of the bacterial chromosome into monomers to permit their segregation at cell division. This Streptococcus pneumoniae serotype 2 (strain D39 / NCTC 7466) protein is Tyrosine recombinase XerS.